The chain runs to 500 residues: Cytochrome P450 2D28 (500 aa).

C446 contacts heme.

Belongs to the cytochrome P450 family. It depends on heme as a cofactor.

It is found in the endoplasmic reticulum membrane. The protein resides in the microsome membrane. The polypeptide is Cytochrome P450 2D28 (CYP2D28A) (Mesocricetus auratus (Golden hamster)).